The primary structure comprises 337 residues: Peroxisome biogenesis factor 10 (337 aa).

Topologically, residues 1–24 are peroxisomal matrix; sequence MKNDNKLQKEALMRLSQLRFPFAD. The helical transmembrane segment at 25 to 54 threads the bilayer; that stretch reads APSIVQAHQKDEQIQGLLIMKVTELCKLIK. S55 is a topological domain (cytoplasmic). Residues 56–77 form a helical membrane-spanning segment; it reads QLFVNSYPKELSIFAKLLYLLF. Residues 78 to 105 lie on the Peroxisomal matrix side of the membrane; it reads TTGRRGRTLGEEYVDLTYTNRKGTRLAG. Residues 106 to 138 traverse the membrane as a helical segment; the sequence is RLKMIVFAFAYPLCPYFITKLYKKIMKNNKESK. The Cytoplasmic portion of the chain corresponds to 139 to 145; that stretch reads IEDTESV. Residues 146–166 form a helical membrane-spanning segment; that stretch reads AAFCKGLLDFILDVHMTLFYF. Topologically, residues 167 to 202 are peroxisomal matrix; that stretch reads KGAFYSISKRIFGMRYVFKHILSKNEANFREEGSQK. The helical transmembrane segment at 203–222 threads the bilayer; it reads YKVLGYILLAQNVMKWYPVL. Residues 223 to 337 lie on the Cytoplasmic side of the membrane; sequence TSTLGSWIYG…QPQEILVLRQ (115 aa). Residues C286, C289, C301, H303, C306, C309, C320, and C323 each contribute to the Zn(2+) site. An RING-type zinc finger spans residues 286–327; the sequence is CILCLMNMSDPSCAPCGHLFCWSCLMSWCKERPECPLCRQHC.

The protein belongs to the pex2/pex10/pex12 family. As to quaternary structure, component of the PEX2-PEX10-PEX12 retrotranslocation channel, composed of PEX2, PEX10 and PEX12.

It localises to the peroxisome membrane. It carries out the reaction S-ubiquitinyl-[E2 ubiquitin-conjugating enzyme]-L-cysteine + [acceptor protein]-L-lysine = [E2 ubiquitin-conjugating enzyme]-L-cysteine + N(6)-ubiquitinyl-[acceptor protein]-L-lysine.. It functions in the pathway protein modification; protein ubiquitination. The E3 ubiquitin-protein ligase activity is stimulated by PEX12. In terms of biological role, E3 ubiquitin-protein ligase component of a retrotranslocation channel required for peroxisome organization by mediating export of the PEX5 receptor from peroxisomes to the cytosol, thereby promoting PEX5 recycling. The retrotranslocation channel is composed of PEX2, PEX10 and PEX12; each subunit contributing transmembrane segments that coassemble into an open channel that specifically allows the passage of PEX5 through the peroxisomal membrane. PEX10 also regulates PEX5 recycling by acting as a E3 ubiquitin-protein ligase. When PEX5 recycling is compromised, PEX10 catalyzes polyubiquitination of PEX5 during its passage through the retrotranslocation channel, leading to its degradation. In Saccharomyces cerevisiae (strain ATCC 204508 / S288c) (Baker's yeast), this protein is Peroxisome biogenesis factor 10.